A 168-amino-acid chain; its full sequence is Photosystem I assembly protein Ycf3 (168 aa).

TPR repeat units follow at residues 35–68 (AFTY…EIDP), 72–105 (SYIL…NPFL), and 120–153 (GEQA…TPGN).

The protein belongs to the Ycf3 family.

The protein localises to the plastid. Its subcellular location is the chloroplast thylakoid membrane. In terms of biological role, essential for the assembly of the photosystem I (PSI) complex. May act as a chaperone-like factor to guide the assembly of the PSI subunits. This is Photosystem I assembly protein Ycf3 from Nicotiana sylvestris (Wood tobacco).